The following is a 110-amino-acid chain: Large ribosomal subunit protein uL22 (110 aa).

The protein belongs to the universal ribosomal protein uL22 family. In terms of assembly, part of the 50S ribosomal subunit.

Its function is as follows. This protein binds specifically to 23S rRNA; its binding is stimulated by other ribosomal proteins, e.g. L4, L17, and L20. It is important during the early stages of 50S assembly. It makes multiple contacts with different domains of the 23S rRNA in the assembled 50S subunit and ribosome. The globular domain of the protein is located near the polypeptide exit tunnel on the outside of the subunit, while an extended beta-hairpin is found that lines the wall of the exit tunnel in the center of the 70S ribosome. The chain is Large ribosomal subunit protein uL22 from Shewanella amazonensis (strain ATCC BAA-1098 / SB2B).